We begin with the raw amino-acid sequence, 545 residues long: ATP synthase subunit alpha (545 aa).

173-180 (GDRKTGKT) is an ATP binding site.

Belongs to the ATPase alpha/beta chains family. As to quaternary structure, F-type ATPases have 2 components, CF(1) - the catalytic core - and CF(0) - the membrane proton channel. CF(1) has five subunits: alpha(3), beta(3), gamma(1), delta(1), epsilon(1). CF(0) has three main subunits: a(1), b(2) and c(9-12). The alpha and beta chains form an alternating ring which encloses part of the gamma chain. CF(1) is attached to CF(0) by a central stalk formed by the gamma and epsilon chains, while a peripheral stalk is formed by the delta and b chains.

The protein resides in the cell membrane. The catalysed reaction is ATP + H2O + 4 H(+)(in) = ADP + phosphate + 5 H(+)(out). Produces ATP from ADP in the presence of a proton gradient across the membrane. The alpha chain is a regulatory subunit. The sequence is that of ATP synthase subunit alpha from Renibacterium salmoninarum (strain ATCC 33209 / DSM 20767 / JCM 11484 / NBRC 15589 / NCIMB 2235).